The primary structure comprises 144 residues: Granulocyte-macrophage colony-stimulating factor (144 aa).

A signal peptide spans 1–17; that stretch reads MWLQNLLFLNTVVCSIS. O-linked (GalNAc...) serine glycosylation is found at Ser22 and Ser24. O-linked (GalNAc...) threonine glycosylation is present at Thr27. Asn44, Asn45, and Asn54 each carry an N-linked (GlcNAc...) asparagine glycan. 2 disulfides stabilise this stretch: Cys71–Cys113 and Cys105–Cys138.

The protein belongs to the GM-CSF family. Monomer. The signaling GM-CSF receptor complex is a dodecamer of two head-to-head hexamers of two alpha, two beta, and two ligand subunits.

Its subcellular location is the secreted. In terms of biological role, cytokine that stimulates the growth and differentiation of hematopoietic precursor cells from various lineages, including granulocytes, macrophages, eosinophils and erythrocytes. This Felis catus (Cat) protein is Granulocyte-macrophage colony-stimulating factor (CSF2).